The primary structure comprises 304 residues: Acetylglutamate kinase (304 aa).

Residues 74–75, Arg96, and Asn201 each bind substrate; that span reads GG.

It belongs to the acetylglutamate kinase family. ArgB subfamily.

It is found in the cytoplasm. It catalyses the reaction N-acetyl-L-glutamate + ATP = N-acetyl-L-glutamyl 5-phosphate + ADP. Its pathway is amino-acid biosynthesis; L-arginine biosynthesis; N(2)-acetyl-L-ornithine from L-glutamate: step 2/4. Catalyzes the ATP-dependent phosphorylation of N-acetyl-L-glutamate. The protein is Acetylglutamate kinase of Alkalilimnicola ehrlichii (strain ATCC BAA-1101 / DSM 17681 / MLHE-1).